The following is a 652-amino-acid chain: MNKRMNELVALLNRYATEYYTSDNPSVSDSEYDRLYRELVELETAYPEQVLADSPTHRVGGKVLDGFEKYSHQYPLYSLQDAFSREELDAFDARVRKEVAHPTYICELKIDGLSISLTYEKGILVAGVTRGDGSIGENITENLKRVKDIPLTLPEELDITVRGECYMPRASFDQVNQARQENGEPEFANPRNAAAGTLRQLDTAVVAKRNLATFLYQEASPSTRDSQEKGLKYLEQLGFVVNPKRILAENIDEIWNFIQEVGQERENLPYDIDGVVIKVNDLASQEELGFTVKAPKWAVAYKFPAEEKEAQLLSVDWTVGRTGVVTPTANLTPVQLAGTTVSRATLHNVDYIAEKDIRKDDTVIVYKAGDIIPAVLRVVESKRVSEEKLDIPTNCPSCNSDLLHFEDEVALRCINPRCPAQIMEGLIHFASRDAMNITGLGPSIVEKLFAANLVKDVADIYRLQEEDFLLLEGVKEKSAAKLYQAIQASKENSAEKLLFGLGIRHVGSKASQLLLQYFHSIENLYQADSEEVASIESLGGVIAKSLQTYFATEGSEILLRELKETGVNLDYKGQTVVADAALSGLTVVLTGKLERLKRSEAKSKLESLGAKVTGSVSKKTDLVVVGADAGSKLQKAQELGIQVRDEAWLESL.

NAD(+)-binding positions include 29-33 (DSEYD), 78-79 (SL), and E107. Residue K109 is the N6-AMP-lysine intermediate of the active site. Positions 130, 164, 278, and 302 each coordinate NAD(+). 4 residues coordinate Zn(2+): C395, C398, C413, and C418. Residues 577-652 (VADAALSGLT…VRDEAWLESL (76 aa)) form the BRCT domain.

The protein belongs to the NAD-dependent DNA ligase family. LigA subfamily. Mg(2+) serves as cofactor. It depends on Mn(2+) as a cofactor.

It carries out the reaction NAD(+) + (deoxyribonucleotide)n-3'-hydroxyl + 5'-phospho-(deoxyribonucleotide)m = (deoxyribonucleotide)n+m + AMP + beta-nicotinamide D-nucleotide.. Its function is as follows. DNA ligase that catalyzes the formation of phosphodiester linkages between 5'-phosphoryl and 3'-hydroxyl groups in double-stranded DNA using NAD as a coenzyme and as the energy source for the reaction. It is essential for DNA replication and repair of damaged DNA. This is DNA ligase from Streptococcus pneumoniae (strain P1031).